The chain runs to 89 residues: Large ribosomal subunit protein eL34 (89 aa).

This sequence belongs to the eukaryotic ribosomal protein eL34 family.

This chain is Large ribosomal subunit protein eL34, found in Methanococcus vannielii (strain ATCC 35089 / DSM 1224 / JCM 13029 / OCM 148 / SB).